The sequence spans 363 residues: Aminomethyltransferase (363 aa).

It belongs to the GcvT family. As to quaternary structure, the glycine cleavage system is composed of four proteins: P, T, L and H.

It carries out the reaction N(6)-[(R)-S(8)-aminomethyldihydrolipoyl]-L-lysyl-[protein] + (6S)-5,6,7,8-tetrahydrofolate = N(6)-[(R)-dihydrolipoyl]-L-lysyl-[protein] + (6R)-5,10-methylene-5,6,7,8-tetrahydrofolate + NH4(+). In terms of biological role, the glycine cleavage system catalyzes the degradation of glycine. This chain is Aminomethyltransferase, found in Thermosipho melanesiensis (strain DSM 12029 / CIP 104789 / BI429).